Consider the following 62-residue polypeptide: UPF0291 protein CLJ_B2839 (62 aa).

It belongs to the UPF0291 family.

Its subcellular location is the cytoplasm. This Clostridium botulinum (strain 657 / Type Ba4) protein is UPF0291 protein CLJ_B2839.